The following is a 497-amino-acid chain: 3-octaprenyl-4-hydroxybenzoate carboxy-lyase (497 aa).

Residue asparagine 175 coordinates Mn(2+). Prenylated FMN contacts are provided by residues 178–180, 192–194, and 197–198; these read IYR, RWL, and RG. Residue glutamate 241 coordinates Mn(2+). The active-site Proton donor is the aspartate 290.

Belongs to the UbiD family. In terms of assembly, homohexamer. Prenylated FMN serves as cofactor. Requires Mn(2+) as cofactor.

It localises to the cell membrane. The catalysed reaction is a 4-hydroxy-3-(all-trans-polyprenyl)benzoate + H(+) = a 2-(all-trans-polyprenyl)phenol + CO2. The protein operates within cofactor biosynthesis; ubiquinone biosynthesis. Functionally, catalyzes the decarboxylation of 3-octaprenyl-4-hydroxy benzoate to 2-octaprenylphenol, an intermediate step in ubiquinone biosynthesis. In Escherichia coli O157:H7, this protein is 3-octaprenyl-4-hydroxybenzoate carboxy-lyase.